A 423-amino-acid chain; its full sequence is uncharacterized protein (423 aa).

The interval 383–423 (ARGTTGGGGTRSGTSTDGQEDGRKPPVVVIREQPPPGNPPR) is disordered.

This sequence belongs to the mycobacterial PPE family.

This is an uncharacterized protein from Mycobacterium tuberculosis (strain CDC 1551 / Oshkosh).